Reading from the N-terminus, the 357-residue chain is MIQEMWTQWVLNIRASCLGALAATPFIWCFIFKSLFTFSIFTSLQISIFYWAVLGAHVTILCYCYITFTKEWSYYIEALGIACLFLTMLTFFISHLMWAPLYTLPFVFVLNCICLSLWVPITYDIVYLCPFITYKYYELGFLNAMLLYYVMVANRMYLSVIFMCPFVLFLGMGVFALKNFHEHPVFENILITCKPIFTAKNKYKTKGTEVNMKLVVHNLGAVLFLLAVEFASVVSVVQRLDIFVGMQNYLFLLFVSMLCCCMFSLPSNAICVVLETFAVVIIIVIHVLIDKLPISIIGGLLVIVILLMCQAIGCQIEIIRTKLAGDVGGPKLCLFLCTVCNIVVSVALTCCNKSEQL.

The protein belongs to the herpesviridae BMRF2 family.

The chain is Gene 58 protein (58) from Saimiri sciureus (Common squirrel monkey).